The following is an 85-amino-acid chain: 4-hydroxyphenylacetate decarboxylase small subunit (85 aa).

[4Fe-4S] cluster-binding residues include His-4, Cys-7, Cys-20, Cys-34, Cys-43, Cys-46, Cys-60, and Cys-78.

Belongs to the HPA decarboxylase small subunit family. In terms of assembly, heterooctamer consisting of 4 large (HpdB) subunits and 4 small (HpdC) subunits, arranged as a tetramer of heterodimers. Requires [4Fe-4S] cluster as cofactor.

The catalysed reaction is 4-hydroxyphenylacetate + H(+) = 4-methylphenol + CO2. It catalyses the reaction 3,4-dihydroxyphenylacetate + H(+) = 4-methylcatechol + CO2. Its function is as follows. Component of the HPA decarboxylase that decarboxylates phenylacetates with a hydroxyl group in the p-position. Active toward 4-hydroxyphenylacetate and 3,4-dihydroxyphenylacetate, forming 4-methylphenol and 4-methylcatechol, respectively. Is likely involved in the catabolism of aromatic amino acids such as tyrosine fermentation. 4-methylphenol (p-cresol) formation provides metabolic toxicity, which allows an active suppression of other microbes and may provide growth advantages for the producers in highly competitive environments. The small subunit is essential for enzymatic activity of HPA decarboxylase, and also seems to be involved in the regulation of the enzyme oligomeric state and catalytic activity. This chain is 4-hydroxyphenylacetate decarboxylase small subunit, found in Clostridioides difficile (strain CD196) (Peptoclostridium difficile).